The chain runs to 487 residues: Diacylglycerol kinase 4 (487 aa).

The DAGKc domain occupies 86–242 (TPEVPLMVFV…LDSWNILITM (157 aa)).

It belongs to the eukaryotic diacylglycerol kinase family. Monomer. Highly expressed in pollen grains. Expressed in roots, hypocotyls, leaf vasculature, developing anthers and stigmas, and receptacles of siliques.

It localises to the endoplasmic reticulum. The protein resides in the cytoplasm. The protein localises to the cytosol. It carries out the reaction a 1,2-diacyl-sn-glycerol + ATP = a 1,2-diacyl-sn-glycero-3-phosphate + ADP + H(+). Phosphorylates the second messenger diacylglycerol (DAG) to generate phosphatidic acid (PA), another important signaling molecule. PA is required for plant development and responses to abiotic stress and pathogen attack. May be involved in the accumulation of PA during cold stress. Involved in the regulation of PA and phosphatidylcholine biosynthesis in growing pollen tubes. Required for nitric oxide-dependent pollen tube growth and re-orientation responses. Functions together with DGK2 in male gametophyte development and biosynthesis of phosphatidylglycerol and phosphatidylinositol in the endoplasmic reticulum (ER). Involved in PA production for pollen grain growth, as well as leaf and root growth. Possesses guanylyl cyclase activity in vitro. The chain is Diacylglycerol kinase 4 from Arabidopsis thaliana (Mouse-ear cress).